Reading from the N-terminus, the 156-residue chain is Crossover junction endodeoxyribonuclease RuvC (156 aa).

Residues Asp7, Glu66, and Asp138 contribute to the active site. 3 residues coordinate Mg(2+): Asp7, Glu66, and Asp138.

It belongs to the RuvC family. As to quaternary structure, homodimer which binds Holliday junction (HJ) DNA. The HJ becomes 2-fold symmetrical on binding to RuvC with unstacked arms; it has a different conformation from HJ DNA in complex with RuvA. In the full resolvosome a probable DNA-RuvA(4)-RuvB(12)-RuvC(2) complex forms which resolves the HJ. Requires Mg(2+) as cofactor.

The protein resides in the cytoplasm. It carries out the reaction Endonucleolytic cleavage at a junction such as a reciprocal single-stranded crossover between two homologous DNA duplexes (Holliday junction).. In terms of biological role, the RuvA-RuvB-RuvC complex processes Holliday junction (HJ) DNA during genetic recombination and DNA repair. Endonuclease that resolves HJ intermediates. Cleaves cruciform DNA by making single-stranded nicks across the HJ at symmetrical positions within the homologous arms, yielding a 5'-phosphate and a 3'-hydroxyl group; requires a central core of homology in the junction. The consensus cleavage sequence is 5'-(A/T)TT(C/G)-3'. Cleavage occurs on the 3'-side of the TT dinucleotide at the point of strand exchange. HJ branch migration catalyzed by RuvA-RuvB allows RuvC to scan DNA until it finds its consensus sequence, where it cleaves and resolves the cruciform DNA. This is Crossover junction endodeoxyribonuclease RuvC from Ehrlichia chaffeensis (strain ATCC CRL-10679 / Arkansas).